The following is a 795-amino-acid chain: Arcadin-4 (795 aa).

Coiled-coil stretches lie at residues 205 to 253, 323 to 412, and 450 to 618; these read YSGL…HEQI, YDAL…YTSL, and FGGV…LKKR.

The protein localises to the cytoplasm. It is found in the cytoskeleton. In terms of biological role, part of an actin-like archaeal cytoskeleton. The protein is Arcadin-4 of Pyrobaculum calidifontis (strain DSM 21063 / JCM 11548 / VA1).